The chain runs to 118 residues: Large ribosomal subunit protein bL20 (118 aa).

The protein belongs to the bacterial ribosomal protein bL20 family.

Binds directly to 23S ribosomal RNA and is necessary for the in vitro assembly process of the 50S ribosomal subunit. It is not involved in the protein synthesizing functions of that subunit. The protein is Large ribosomal subunit protein bL20 of Francisella tularensis subsp. novicida (strain U112).